The chain runs to 448 residues: Chromosomal replication initiator protein DnaA 1 (448 aa).

The interval 1–76 is domain I, interacts with DnaA modulators; that stretch reads MLTSETQNVW…FLPVDMSGEP (76 aa). The segment at 76–111 is domain II; that stretch reads PAIRFIIAPPQKKIIPPNHFSISSSQKEEQSPNSDV. The interval 112-328 is domain III, AAA+ region; sequence KLNNNYRFEN…GAINRLSAHC (217 aa). Gly156, Gly158, Lys159, and Thr160 together coordinate ATP. The interval 329 to 448 is domain IV, binds dsDNA; it reads RLLDLNITEE…IGMVRRNIES (120 aa).

The protein belongs to the DnaA family. As to quaternary structure, oligomerizes as a right-handed, spiral filament on DNA at oriC.

It localises to the cytoplasm. Functionally, plays an essential role in the initiation and regulation of chromosomal replication. ATP-DnaA binds to the origin of replication (oriC) to initiate formation of the DNA replication initiation complex once per cell cycle. Binds the DnaA box (a 9 base pair repeat at the origin) and separates the double-stranded (ds)DNA. Forms a right-handed helical filament on oriC DNA; dsDNA binds to the exterior of the filament while single-stranded (ss)DNA is stabiized in the filament's interior. The ATP-DnaA-oriC complex binds and stabilizes one strand of the AT-rich DNA unwinding element (DUE), permitting loading of DNA polymerase. After initiation quickly degrades to an ADP-DnaA complex that is not apt for DNA replication. Binds acidic phospholipids. In Protochlamydia amoebophila (strain UWE25), this protein is Chromosomal replication initiator protein DnaA 1.